Reading from the N-terminus, the 581-residue chain is Laccase-1 (581 aa).

The N-terminal stretch at Met-1 to Ala-25 is a signal peptide. Plastocyanin-like domains follow at residues Asn-34 to Pro-150 and Glu-161 to Lys-312. Asn-80 carries N-linked (GlcNAc...) asparagine glycosylation. The Cu cation site is built by His-84, His-86, His-129, and His-131. N-linked (GlcNAc...) asparagine glycans are attached at residues Asn-241, Asn-300, Asn-386, and Asn-403. The 137-residue stretch at Asp-429–Pro-565 folds into the Plastocyanin-like 3 domain. Residues His-482, His-485, His-487, His-544, Cys-545, His-546, and His-550 each coordinate Cu cation.

It belongs to the multicopper oxidase family. It depends on Cu cation as a cofactor. Expressed in roots, stems and flowers.

It localises to the secreted. Its subcellular location is the extracellular space. The protein localises to the apoplast. It carries out the reaction 4 hydroquinone + O2 = 4 benzosemiquinone + 2 H2O. Lignin degradation and detoxification of lignin-derived products. This chain is Laccase-1 (LAC1), found in Arabidopsis thaliana (Mouse-ear cress).